The sequence spans 245 residues: Ribosomal RNA large subunit methyltransferase E (245 aa).

The disordered stretch occupies residues 1–25 (MTKSPIGGNRSGRKLGQKVKKGKLK). The span at 11 to 25 (SGRKLGQKVKKGKLK) shows a compositional bias: basic residues. Residues G81, W83, D104, D120, and D144 each coordinate S-adenosyl-L-methionine. K184 (proton acceptor) is an active-site residue.

This sequence belongs to the class I-like SAM-binding methyltransferase superfamily. RNA methyltransferase RlmE family.

It is found in the cytoplasm. The catalysed reaction is uridine(2552) in 23S rRNA + S-adenosyl-L-methionine = 2'-O-methyluridine(2552) in 23S rRNA + S-adenosyl-L-homocysteine + H(+). Its function is as follows. Specifically methylates the uridine in position 2552 of 23S rRNA at the 2'-O position of the ribose in the fully assembled 50S ribosomal subunit. In Rhizobium meliloti (strain 1021) (Ensifer meliloti), this protein is Ribosomal RNA large subunit methyltransferase E.